Consider the following 477-residue polypeptide: UDP-N-acetylmuramate--L-alanine ligase (477 aa).

122–128 (GTHGKTT) contacts ATP.

It belongs to the MurCDEF family.

It is found in the cytoplasm. The catalysed reaction is UDP-N-acetyl-alpha-D-muramate + L-alanine + ATP = UDP-N-acetyl-alpha-D-muramoyl-L-alanine + ADP + phosphate + H(+). Its pathway is cell wall biogenesis; peptidoglycan biosynthesis. Functionally, cell wall formation. The protein is UDP-N-acetylmuramate--L-alanine ligase of Xanthomonas campestris pv. campestris (strain 8004).